The chain runs to 634 residues: Alpha-L-iduronidase (634 aa).

Positions 1–16 (MLTFFAAFLAAPLALA) are cleaved as a signal peptide. Positions 44, 46, and 48 each coordinate alpha-D-mannopyranose. His-81 is a binding site for alpha-L-iduronate. The N-linked (GlcNAc...) asparagine glycan is linked to Asn-100. Alpha-L-iduronate-binding residues include Asn-171 and Glu-172. Catalysis depends on Glu-172, which acts as the Proton donor. N-linked (GlcNAc...) asparagine glycosylation is found at Asn-180 and Asn-233. Residues Lys-254, Glu-289, and Gly-295 each contribute to the alpha-L-iduronate site. Glu-289 (nucleophile) is an active-site residue. An alpha-D-mannopyranose-binding site is contributed by Trp-296. Asn-326 carries an N-linked (GlcNAc...) asparagine glycan. Alpha-L-iduronate contacts are provided by Asp-339 and Arg-353. Residues Asn-362, Asn-405, and Asn-441 are each glycosylated (N-linked (GlcNAc...) asparagine). A disulfide bond links Cys-531 and Cys-567.

Belongs to the glycosyl hydrolase 39 family. As to quaternary structure, monomer. N-glycosylation contributes to substrate binding and is required for full enzymatic activity. Ubiquitous.

Its subcellular location is the lysosome. It carries out the reaction Hydrolysis of unsulfated alpha-L-iduronosidic linkages in dermatan sulfate.. This Mus musculus (Mouse) protein is Alpha-L-iduronidase (Idua).